The chain runs to 569 residues: Dolichol kinase EVAN (569 aa).

The Cytoplasmic portion of the chain corresponds to methionine 1–arginine 22. A helical membrane pass occupies residues isoleucine 23 to leucine 43. At serine 44–glycine 67 the chain is on the lumenal side. A helical transmembrane segment spans residues alanine 68 to valine 88. The Cytoplasmic portion of the chain corresponds to glutamine 89–threonine 108. A helical transmembrane segment spans residues methionine 109–methionine 129. Residues serine 130 to arginine 147 are Lumenal-facing. Residues valine 148–serine 168 traverse the membrane as a helical segment. At histidine 169–methionine 178 the chain is on the cytoplasmic side. The helical transmembrane segment at leucine 179–phenylalanine 199 threads the bilayer. At proline 200 to glutamate 207 the chain is on the lumenal side. A helical membrane pass occupies residues alanine 208–alanine 228. Over lysine 229–glycine 252 the chain is Cytoplasmic. Residues isoleucine 253–leucine 273 traverse the membrane as a helical segment. Over histidine 274–serine 296 the chain is Lumenal. The N-linked (GlcNAc...) asparagine glycan is linked to asparagine 289. The helical transmembrane segment at valine 297–phenylalanine 317 threads the bilayer. Residues valine 318–arginine 340 are Cytoplasmic-facing. The chain crosses the membrane as a helical span at residues leucine 341–isoleucine 361. The Lumenal portion of the chain corresponds to serine 362 to arginine 369. Residues isoleucine 370–leucine 390 traverse the membrane as a helical segment. Residues glutamine 391–lysine 393 lie on the Cytoplasmic side of the membrane. Residues phenylalanine 394–isoleucine 414 traverse the membrane as a helical segment. Topologically, residues tryptophan 415–leucine 440 are lumenal. A helical membrane pass occupies residues isoleucine 441–phenylalanine 461. Over asparagine 462–arginine 464 the chain is Cytoplasmic. Residues alanine 465 to valine 485 form a helical membrane-spanning segment. The Lumenal segment spans residues glycine 486 to glycine 508. Residues histidine 487 to glutamate 503 form a CTP-binding region. A helical membrane pass occupies residues isoleucine 509 to isoleucine 529. The Cytoplasmic segment spans residues leucine 530–glutamate 548. A helical transmembrane segment spans residues alanine 549–leucine 569.

Belongs to the polyprenol kinase family.

The protein resides in the endoplasmic reticulum membrane. The catalysed reaction is a di-trans,poly-cis-dolichol + CTP = a di-trans,poly-cis-dolichyl phosphate + CDP + H(+). Its function is as follows. Essential for pollen development. Involved in protein N-glycosylation in the endoplasmic reticulum (ER), especially in the female gametophyte. Mediates pollen tube (PT) reception in synergids through protein glycosylation. In Arabidopsis thaliana (Mouse-ear cress), this protein is Dolichol kinase EVAN.